We begin with the raw amino-acid sequence, 160 residues long: Nitrate reductase [NADH] (160 aa).

Position 37 (T37) interacts with FAD.

It belongs to the nitrate reductase family. Homodimer. It depends on FAD as a cofactor. Heme serves as cofactor. Requires Mo-molybdopterin as cofactor.

It catalyses the reaction nitrite + NAD(+) + H2O = nitrate + NADH + H(+). Its function is as follows. Nitrate reductase is a key enzyme involved in the first step of nitrate assimilation in plants, fungi and bacteria. In Lotus tetragonolobus (Winged pea), this protein is Nitrate reductase [NADH] (NIA).